The sequence spans 60 residues: MAKKESFFKGVKSEMEKTSWPTKEELFKYTIIVVSTVIFFLVFFYALDIGINALKQLFLG.

The helical transmembrane segment at 31–51 threads the bilayer; sequence IIVVSTVIFFLVFFYALDIGI.

Belongs to the SecE/SEC61-gamma family. Component of the Sec protein translocase complex. Heterotrimer consisting of SecY, SecE and SecG subunits. The heterotrimers can form oligomers, although 1 heterotrimer is thought to be able to translocate proteins. Interacts with the ribosome. Interacts with SecDF, and other proteins may be involved. Interacts with SecA.

The protein resides in the cell membrane. Functionally, essential subunit of the Sec protein translocation channel SecYEG. Clamps together the 2 halves of SecY. May contact the channel plug during translocation. The chain is Protein translocase subunit SecE from Staphylococcus epidermidis (strain ATCC 35984 / DSM 28319 / BCRC 17069 / CCUG 31568 / BM 3577 / RP62A).